We begin with the raw amino-acid sequence, 130 residues long: Transcription antitermination protein NusB (130 aa).

Belongs to the NusB family.

In terms of biological role, involved in transcription antitermination. Required for transcription of ribosomal RNA (rRNA) genes. Binds specifically to the boxA antiterminator sequence of the ribosomal RNA (rrn) operons. The sequence is that of Transcription antitermination protein NusB from Bacillus cereus (strain B4264).